The primary structure comprises 423 residues: Gamma-glutamyl phosphate reductase (423 aa).

It belongs to the gamma-glutamyl phosphate reductase family.

It localises to the cytoplasm. It catalyses the reaction L-glutamate 5-semialdehyde + phosphate + NADP(+) = L-glutamyl 5-phosphate + NADPH + H(+). The protein operates within amino-acid biosynthesis; L-proline biosynthesis; L-glutamate 5-semialdehyde from L-glutamate: step 2/2. Its function is as follows. Catalyzes the NADPH-dependent reduction of L-glutamate 5-phosphate into L-glutamate 5-semialdehyde and phosphate. The product spontaneously undergoes cyclization to form 1-pyrroline-5-carboxylate. The protein is Gamma-glutamyl phosphate reductase of Burkholderia ambifaria (strain MC40-6).